A 162-amino-acid polypeptide reads, in one-letter code: UPF0460 protein y4vQ (162 aa).

It belongs to the UPF0460 family.

This is UPF0460 protein y4vQ from Sinorhizobium fredii (strain NBRC 101917 / NGR234).